We begin with the raw amino-acid sequence, 589 residues long: Protein FAM117B (589 aa).

The segment at 1 to 310 (MSQRVRRNGS…RDKERQSPFH (310 aa)) is disordered. Position 10 is a phosphoserine (Ser-10). The segment covering 16–29 (SLGGGAVATAGGPG) has biased composition (gly residues). A compositionally biased stretch (low complexity) spans 45–56 (QQQQQQHGSPTR). A compositionally biased stretch (gly residues) spans 57 to 85 (SGGGGGGNNNGGCCGGASGPAGGGGGGGP). Position 106 is a phosphoserine (Ser-106). Over residues 108 to 136 (TVATQTGASATSTRGTSPTRSAAPGARGS) the composition is skewed to low complexity. Over residues 137–146 (PPRPPPPPPL) the composition is skewed to pro residues. 2 stretches are compositionally biased toward low complexity: residues 147–158 (LGTVSSPSSSPT) and 207–220 (PSSS…RTSS). A phosphoserine mark is found at Ser-210, Ser-219, Ser-220, and Ser-273. Basic residues predominate over residues 292-302 (RSKHSSRHHRD). Residues Ser-345 and Ser-391 each carry the phosphoserine modification. Disordered stretches follow at residues 370–464 (QDIP…NNSY) and 556–589 (STNT…EAEG). Residues 384-397 (QRSSSTRSIDTQTP) show a composition bias toward polar residues. The segment covering 404-417 (SNNSSRSQSVSPTS) has biased composition (low complexity). Ser-449 and Ser-457 each carry phosphoserine.

This chain is Protein FAM117B (FAM117B), found in Homo sapiens (Human).